Here is a 247-residue protein sequence, read N- to C-terminus: Programmed cell death 1 ligand 2 (247 aa).

The N-terminal stretch at 1–19 (MLLLLPILNLSLQLHPVAA) is a signal peptide. At 20–221 (LFTVTAPKEV…RMEPKVPRTW (202 aa)) the chain is on the extracellular side. The Ig-like V-type domain occupies 21–118 (FTVTAPKEVY…AWDYKYLTVK (98 aa)). 2 disulfides stabilise this stretch: C42–C102 and C143–C192. N64, N157, N163, and N189 each carry an N-linked (GlcNAc...) asparagine glycan. Positions 122 to 203 (SYMRIDTRIL…FWNAHMKELT (82 aa)) constitute an Ig-like C2-type domain. The helical transmembrane segment at 222–242 (PLHVFIPACTIALIFLAIVII) threads the bilayer. Residues 243-247 (QRKRI) lie on the Cytoplasmic side of the membrane.

This sequence belongs to the immunoglobulin superfamily. BTN/MOG family. In terms of assembly, interacts with PDCD1. As to expression, expressed in immature and mature bone marrow-derived dendritic cells and splenic dendritic cells. Highly expressed in placenta, liver and weakly expressed in heart, spleen, lymph nodes and thymus. Also expressed in some tumor cell lines of lymphoid origin.

Its subcellular location is the cell membrane. Functionally, involved in the costimulatory signal essential for T-cell proliferation and IFNG production in a PDCD1-independent manner. Interaction with PDCD1 inhibits T-cell proliferation by blocking cell cycle progression and cytokine production. The polypeptide is Programmed cell death 1 ligand 2 (Pdcd1lg2) (Mus musculus (Mouse)).